The following is a 526-amino-acid chain: G-protein coupled receptor 161 (526 aa).

The Extracellular segment spans residues 1–27; the sequence is MNGSKNGTAVANSTNGLDDNGLMVLES. Residues Asn2, Asn6, and Asn12 are each glycosylated (N-linked (GlcNAc...) asparagine). The chain crosses the membrane as a helical span at residues 28–48; the sequence is VSIIIIAILACLGNLVIVVTL. The Cytoplasmic portion of the chain corresponds to 49 to 60; the sequence is YKKPYLLTPSNK. The chain crosses the membrane as a helical span at residues 61 to 81; sequence FVFSLTSSNLLLSVLMLPFVV. Residues 82-98 are Extracellular-facing; it reads ASSVRRDWMFGVVWCNF. Cys96 and Cys174 are disulfide-bonded. The N-linked (GlcNAc...) asparagine glycan is linked to Asn97. The helical transmembrane segment at 99 to 119 threads the bilayer; the sequence is TALLHLLVSSSSMLTLGAIAI. The Cytoplasmic segment spans residues 120 to 139; sequence DRYYAVLYPMIYPMKITGNR. Residues 140–160 traverse the membrane as a helical segment; it reads AVLAIVYIWLHSLVGCLPPLF. At 161 to 186 the chain is on the extracellular side; the sequence is GWSSFEFDRFKWTCTVSWHKEISYTA. Residues 187-207 traverse the membrane as a helical segment; it reads FWVTWCCLLPLVAMLVCYGVI. Topologically, residues 208–263 are cytoplasmic; it reads FRVARIKARKVYCGSVVVSQEESSSQNNGRKNSNTSTSSSGSRKSLIYSGSQCKAF. The tract at residues 231 to 250 is disordered; that stretch reads SSQNNGRKNSNTSTSSSGSR. The chain crosses the membrane as a helical span at residues 264–284; the sequence is ITILVVLGTFLTTWGPYVVVI. At 285 to 300 the chain is on the extracellular side; the sequence is STEALLGKNSVSPQVE. A helical transmembrane segment spans residues 301–321; the sequence is TLVSWLSFTSAVCHPLIYGLW. Topologically, residues 322-526 are cytoplasmic; the sequence is NKTVRKELLG…EEEMEREEKM (205 aa). The tract at residues 505-526 is disordered; that stretch reads IDEGIVKDDDDDEEEMEREEKM. A compositionally biased stretch (acidic residues) spans 512 to 526; the sequence is DDDDDEEEMEREEKM.

Belongs to the G-protein coupled receptor 1 family.

The protein localises to the cell projection. Its subcellular location is the cilium membrane. It is found in the cell membrane. Its function is as follows. Key negative regulator of Shh signaling during neural tube development. Recruited to primary cilia and acts as a regulator of the PKA-dependent basal repression machinery in Shh signaling by increasing cAMP levels, leading to promote the PKA-dependent processing of gli3 into gli3r and repress the Shh signaling. In presence of shh, it is removed from primary cilia, preventing its activity and allowing activation of the Shh signaling. Required in left/right patterning by modulating Ca(2+) levels in the cells surrounding the Kupffer vesicle. The protein is G-protein coupled receptor 161 (gpr161) of Danio rerio (Zebrafish).